Consider the following 574-residue polypeptide: MALKGRALYDFHSENKEEISIQQDEDLVIFSETSLDGWLQGQNSRGETGLFPASYVEIVRSGISTNHADYSSSPAGSPGAQVSLYNSPSVASPARSGGGSGFLSNQGSFEEDDDDDWDDWDDGCTVVEEPRAGGLGTNGHPPLNLSYPGAYPSQHMAFRPKPPLERQDSLASAKRGSVVGRNLNRFSCFVRSGVEAFILGDVPMMAKIAETYSIEMGPRGPQWKANPHPFACSVEDPTKQTKFKGIKSYISYKLTPTHAASPVYRRYKHFDWLYNRLLHKFTVISVPHLPEKQATGRFEEDFIEKRKRRLILWMDHMTSHPVLSQYEGFQHFLSCLDDKQWKMGKRRAEKDEMVGASFLLTFQIPTEHQDLQDVEDRVDTFKAFSKKMDDSVLQLSTVASELVRKHVGGFRKEFQKLGSAFQAISHSFQMDPPFCSEALNSAISHTGRTYEAIGEMFAEQPKNDLFQMLDTLSLYQGLLSNFPDIIHLQKGAFAKVKESQRMSDEGRMVQDEADGIRRRCRVVGFALQAEMNHFHQRRELDFKHMMQNYLRQQILFYQRVGQQLEKTLRMYDNL.

An SH3 domain is found at 1–61; it reads MALKGRALYD…PASYVEIVRS (61 aa). The segment at 68 to 119 is disordered; the sequence is ADYSSSPAGSPGAQVSLYNSPSVASPARSGGGSGFLSNQGSFEEDDDDDWDD. A phosphoserine mark is found at S77 and S92. The span at 109–119 shows a compositional bias: acidic residues; the sequence is FEEDDDDDWDD. The PX domain maps to 230–340; the sequence is FACSVEDPTK…HFLSCLDDKQ (111 aa). The BAR domain occupies 371 to 574; the sequence is LQDVEDRVDT…EKTLRMYDNL (204 aa).

The protein belongs to the sorting nexin family. In terms of assembly, homodimer (via BAR domain). Interacts with ADAM15. Interacts with FASLG. Interacts (via SH3 domain) with DNM1 and DNM2. Interacts with WASL. Interacts with FCHSD1 (via the F-BAR domain). Post-translationally, phosphorylated. Detected in heart and pancreas.

It is found in the cytoplasm. The protein localises to the cytosol. Its subcellular location is the membrane. It localises to the cytoplasmic vesicle membrane. Plays a role in the reorganization of the cytoskeleton, endocytosis and cellular vesicle trafficking via its interactions with membranes, WASL, DNM1 and DNM2. Acts both during interphase and at the end of mitotic cell divisions. Required for efficient progress through mitosis and cytokinesis. Required for normal formation of the cleavage furrow at the end of mitosis. Modulates endocytosis of cell-surface proteins, such as APP and PRNP; this then modulates the secretion of APP and PRNP peptides. Promotes membrane tubulation (in vitro). May promote the formation of macropinosomes. In Homo sapiens (Human), this protein is Sorting nexin-33 (SNX33).